Consider the following 145-residue polypeptide: Androgenic gland hormone (145 aa).

The first 21 residues, 1 to 21, serve as a signal peptide directing secretion; that stretch reads MKGLLFIVSLLCLTLHQRVWA. 4 cysteine pairs are disulfide-bonded: Cys33–Cys122, Cys42–Cys59, Cys44–Cys140, and Cys123–Cys131. Residues 68 to 112 constitute a propeptide, c peptide; sequence SADDEDYLFEEDEDDEFFHPRALSPPAAKSGDERLEDEVSFHSRS. N-linked (GlcNAc...) asparagine glycosylation occurs at Asn132.

As to expression, androgenic gland.

It localises to the secreted. Functionally, controls sex differentiation and the formation of male appendages, spermatogenesis, pigmentation, and male specific behavior. The polypeptide is Androgenic gland hormone (AGH) (Porcellio scaber (Common rough woodlouse)).